A 98-amino-acid chain; its full sequence is Aspartyl/glutamyl-tRNA(Asn/Gln) amidotransferase subunit C (98 aa).

It belongs to the GatC family. Heterotrimer of A, B and C subunits.

The catalysed reaction is L-glutamyl-tRNA(Gln) + L-glutamine + ATP + H2O = L-glutaminyl-tRNA(Gln) + L-glutamate + ADP + phosphate + H(+). It carries out the reaction L-aspartyl-tRNA(Asn) + L-glutamine + ATP + H2O = L-asparaginyl-tRNA(Asn) + L-glutamate + ADP + phosphate + 2 H(+). Functionally, allows the formation of correctly charged Asn-tRNA(Asn) or Gln-tRNA(Gln) through the transamidation of misacylated Asp-tRNA(Asn) or Glu-tRNA(Gln) in organisms which lack either or both of asparaginyl-tRNA or glutaminyl-tRNA synthetases. The reaction takes place in the presence of glutamine and ATP through an activated phospho-Asp-tRNA(Asn) or phospho-Glu-tRNA(Gln). This Microcystis aeruginosa (strain NIES-843 / IAM M-2473) protein is Aspartyl/glutamyl-tRNA(Asn/Gln) amidotransferase subunit C.